Here is a 389-residue protein sequence, read N- to C-terminus: Homoserine O-acetyltransferase (389 aa).

The segment at Met1–Leu21 is disordered. Polar residues predominate over residues Lys8–Ser18. The region spanning Asn56 to Asp366 is the AB hydrolase-1 domain. Catalysis depends on Ser161, which acts as the Nucleophile. Arg231 provides a ligand contact to substrate. Catalysis depends on residues Asp327 and His360. Asp361 provides a ligand contact to substrate.

This sequence belongs to the AB hydrolase superfamily. MetX family. In terms of assembly, homodimer.

It localises to the cytoplasm. It catalyses the reaction L-homoserine + acetyl-CoA = O-acetyl-L-homoserine + CoA. It functions in the pathway amino-acid biosynthesis; L-methionine biosynthesis via de novo pathway; O-acetyl-L-homoserine from L-homoserine: step 1/1. Its function is as follows. Transfers an acetyl group from acetyl-CoA to L-homoserine, forming acetyl-L-homoserine. In Mesorhizobium japonicum (strain LMG 29417 / CECT 9101 / MAFF 303099) (Mesorhizobium loti (strain MAFF 303099)), this protein is Homoserine O-acetyltransferase.